A 150-amino-acid polypeptide reads, in one-letter code: Endoribonuclease YbeY (150 aa).

Positions 116, 120, and 126 each coordinate Zn(2+).

It belongs to the endoribonuclease YbeY family. Zn(2+) is required as a cofactor.

The protein resides in the cytoplasm. Functionally, single strand-specific metallo-endoribonuclease involved in late-stage 70S ribosome quality control and in maturation of the 3' terminus of the 16S rRNA. This is Endoribonuclease YbeY from Mesomycoplasma hyopneumoniae (strain 232) (Mycoplasma hyopneumoniae).